Here is a 105-residue protein sequence, read N- to C-terminus: Protein METHYLENE BLUE SENSITIVITY 1 (105 aa).

Positions 26–46 are disordered; it reads RGGGKAGIADRTGKEKGGHAK. A compositionally biased stretch (basic and acidic residues) spans 36–46; that stretch reads RTGKEKGGHAK.

Mainly expressed in the epidermis.

It is found in the nucleus. The protein localises to the cytoplasm. It localises to the stress granule. Its function is as follows. Required for acclimation to reactive oxygen species (ROS) responses downstream of beta-cyclocitral (beta-cc) or mediated by dihydroactinidiolide, including singlet oxygen 1O(2) detoxification reactions, especially upon light-mediated photooxidative stress, and leading to programmed cell death. Prevents leaf senescence. Involved in cold acclimation. The chain is Protein METHYLENE BLUE SENSITIVITY 1 from Arabidopsis thaliana (Mouse-ear cress).